The primary structure comprises 370 residues: Putative methylthioribose-1-phosphate isomerase (370 aa).

Substrate contacts are provided by residues 66–68, Arg109, and Gln217; that span reads RGA. The active-site Proton donor is Asp258. Substrate is bound at residue 268-269; it reads NK.

The protein belongs to the eIF-2B alpha/beta/delta subunits family. MtnA subfamily.

It catalyses the reaction 5-(methylsulfanyl)-alpha-D-ribose 1-phosphate = 5-(methylsulfanyl)-D-ribulose 1-phosphate. In terms of biological role, catalyzes the interconversion of methylthioribose-1-phosphate (MTR-1-P) into methylthioribulose-1-phosphate (MTRu-1-P). This is Putative methylthioribose-1-phosphate isomerase from Aeropyrum pernix (strain ATCC 700893 / DSM 11879 / JCM 9820 / NBRC 100138 / K1).